The following is a 72-amino-acid chain: Lantibiotic lichenicidin VK21 A2 (72 aa).

The segment at 1–21 is disordered; the sequence is MKTMKNSAAREAFKGANHPAG. The propeptide occupies 1-40; the sequence is MKTMKNSAAREAFKGANHPAGMVSEEELKALVGGNDVNPE. Threonine 41 carries the post-translational modification 2-oxobutanoic acid. (Z)-2,3-didehydrobutyrine occurs at positions 42, 45, and 46. A cross-link (lanthionine (Ser-Cys)) is located at residues 47 to 51; it reads SSWTC. The residue at position 48 (serine 48) is a 2,3-didehydroalanine (Ser). 2 positions are modified to (Z)-2,3-didehydrobutyrine: threonine 53 and threonine 57. A cross-link (lanthionine (Ser-Cys)) is located at residues 59 to 63; that stretch reads SASLC. 2 cross-links (beta-methyllanthionine (Thr-Cys)) span residues 65-68 and 69-72; these read TTKC and TSRC. (Z)-2,3-didehydrobutyrine is present on threonine 66.

In terms of processing, maturation of lantibiotics involves the enzymatic conversion of Thr, and Ser into dehydrated AA and the formation of thioether bonds with cysteine. This is followed by membrane translocation and cleavage of the modified precursor. The 2,3-didehydrobutyrines are determined to be the Z-isomers.

Its subcellular location is the secreted. Its function is as follows. Lanthionine-containing peptide antibiotic (lantibiotic) active on Gram-positive bacteria. The bactericidal activity of lantibiotics is based on depolarization of energized bacterial cytoplasmic membranes, initiated by the formation of aqueous transmembrane pores. When present individually, LchA2 exhibits activity towards B.subtilis L1 (IC(50)=30 uM), Rhodococcus sp. SS2 (IC(50)=16.6 uM), M.luteus B1314 (IC(50)=2.6 uM), B.megaterium VKM41 (IC(50)=2 uM), S.aureus 209p (IC(50)=20 uM), B.pumilus 2001, B.globigii I, B.amyloliquefaciens I, M.smegmatis 1171 and M.phlei 1291. However, when combined with LchA1, it displays much stronger activity against B.subtilis L1 (IC(50)=0.64 uM), Rhodococcus sp. SS2 (IC(50)=0.64 uM), M.luteus B1314 (IC(50)=0.09 uM), B.megaterium VKM41 (IC(50)=0.12 uM) and S.aureus 209p (IC(50)=0.64 uM). The activity of the combined LchA1 and LchA2 peptides is strongest at a molar ratio of 1. Even when applied at 17-fold concentration of the highest IC(50) values for Gram-positive bacteria, neither the individual nor the combined peptides display activity against Gram-negative bacteria P.aeruginosa PAO1, P.putida I-97 or E.coli C600. This chain is Lantibiotic lichenicidin VK21 A2, found in Bacillus licheniformis.